Here is a 694-residue protein sequence, read N- to C-terminus: Elongation factor G (694 aa).

In terms of domain architecture, tr-type G spans 8–287; it reads EDYRNFGIMA…AVVEFLPAPT (280 aa). Residues 17–24, 86–90, and 140–143 each bind GTP; these read AHIDAGKT, DTPGH, and NKMD.

It belongs to the TRAFAC class translation factor GTPase superfamily. Classic translation factor GTPase family. EF-G/EF-2 subfamily.

It is found in the cytoplasm. Functionally, catalyzes the GTP-dependent ribosomal translocation step during translation elongation. During this step, the ribosome changes from the pre-translocational (PRE) to the post-translocational (POST) state as the newly formed A-site-bound peptidyl-tRNA and P-site-bound deacylated tRNA move to the P and E sites, respectively. Catalyzes the coordinated movement of the two tRNA molecules, the mRNA and conformational changes in the ribosome. The sequence is that of Elongation factor G from Brucella canis (strain ATCC 23365 / NCTC 10854 / RM-666).